The primary structure comprises 469 residues: Glutamine synthetase (469 aa).

The GS beta-grasp domain occupies 15–96 (EDVKFIDVRF…INFFIHDPIT (82 aa)). The GS catalytic domain occupies 104 to 469 (PRNVAKKAEA…PYEYEQYYDV (366 aa)). Residues glutamate 129 and glutamate 131 each coordinate Mg(2+). Glutamate 205 lines the ATP pocket. Residues glutamate 210 and glutamate 218 each contribute to the Mg(2+) site. 221-223 (YKF) contacts ATP. Residues 262–263 (NG) and glycine 263 contribute to the L-glutamate site. Histidine 267 serves as a coordination point for Mg(2+). ATP contacts are provided by residues 269 to 271 (HQS) and serine 271. L-glutamate-binding residues include arginine 320, glutamate 326, and arginine 338. ATP contacts are provided by arginine 338, arginine 343, and lysine 352. Residue glutamate 357 participates in Mg(2+) binding. Arginine 359 is a binding site for L-glutamate. Tyrosine 397 bears the O-AMP-tyrosine mark.

Belongs to the glutamine synthetase family. Oligomer of 12 subunits arranged in the form of two hexagons. Mg(2+) is required as a cofactor.

Its subcellular location is the cytoplasm. It carries out the reaction L-glutamate + NH4(+) + ATP = L-glutamine + ADP + phosphate + H(+). With respect to regulation, the activity of this enzyme could be controlled by adenylation under conditions of abundant glutamine. Functionally, catalyzes the ATP-dependent biosynthesis of glutamine from glutamate and ammonia. The chain is Glutamine synthetase from Streptomyces viridochromogenes.